The chain runs to 2298 residues: Protein Ycf2 (2298 aa).

1638-1645 (GSIGTGRS) lines the ATP pocket.

The protein belongs to the Ycf2 family.

The protein localises to the plastid. It localises to the chloroplast stroma. Probable ATPase of unknown function. Its presence in a non-photosynthetic plant (Epifagus virginiana) and experiments in tobacco indicate that it has an essential function which is probably not related to photosynthesis. This is Protein Ycf2 from Gossypium barbadense (Sea Island cotton).